The primary structure comprises 272 residues: Putative pyruvate, phosphate dikinase regulatory protein (272 aa).

Residue 149–156 (GVSRTSKT) coordinates ADP.

It belongs to the pyruvate, phosphate/water dikinase regulatory protein family. PDRP subfamily.

The enzyme catalyses N(tele)-phospho-L-histidyl/L-threonyl-[pyruvate, phosphate dikinase] + ADP = N(tele)-phospho-L-histidyl/O-phospho-L-threonyl-[pyruvate, phosphate dikinase] + AMP + H(+). It carries out the reaction N(tele)-phospho-L-histidyl/O-phospho-L-threonyl-[pyruvate, phosphate dikinase] + phosphate + H(+) = N(tele)-phospho-L-histidyl/L-threonyl-[pyruvate, phosphate dikinase] + diphosphate. Functionally, bifunctional serine/threonine kinase and phosphorylase involved in the regulation of the pyruvate, phosphate dikinase (PPDK) by catalyzing its phosphorylation/dephosphorylation. The sequence is that of Putative pyruvate, phosphate dikinase regulatory protein from Lactiplantibacillus plantarum (strain ATCC BAA-793 / NCIMB 8826 / WCFS1) (Lactobacillus plantarum).